Reading from the N-terminus, the 428-residue chain is Elongation factor 1-alpha (428 aa).

A tr-type G domain is found at 5-215 (KPHVNIVFIG…ALDQIPEPPK (211 aa)). Residues 14–21 (GHVDHGKS) form a G1 region. Residue 14–21 (GHVDHGKS) coordinates GTP. Ser21 contributes to the Mg(2+) binding site. The segment at 68–72 (GITID) is G2. Residues 89 to 92 (DAPG) form a G3 region. Residues 89 to 93 (DAPGH) and 144 to 147 (NKMD) each bind GTP. A G4 region spans residues 144–147 (NKMD). A G5 region spans residues 181-183 (SAW).

The protein belongs to the TRAFAC class translation factor GTPase superfamily. Classic translation factor GTPase family. EF-Tu/EF-1A subfamily.

Its subcellular location is the cytoplasm. It carries out the reaction GTP + H2O = GDP + phosphate + H(+). GTP hydrolase that promotes the GTP-dependent binding of aminoacyl-tRNA to the A-site of ribosomes during protein biosynthesis. The sequence is that of Elongation factor 1-alpha from Thermococcus kodakarensis (strain ATCC BAA-918 / JCM 12380 / KOD1) (Pyrococcus kodakaraensis (strain KOD1)).